We begin with the raw amino-acid sequence, 186 residues long: Threonylcarbamoyl-AMP synthase (186 aa).

The region spanning 2–186 (VSNLQQVVKA…ARTEQLLRQG (185 aa)) is the YrdC-like domain.

It belongs to the SUA5 family. TsaC subfamily.

The protein localises to the cytoplasm. The catalysed reaction is L-threonine + hydrogencarbonate + ATP = L-threonylcarbamoyladenylate + diphosphate + H2O. In terms of biological role, required for the formation of a threonylcarbamoyl group on adenosine at position 37 (t(6)A37) in tRNAs that read codons beginning with adenine. Catalyzes the conversion of L-threonine, HCO(3)(-)/CO(2) and ATP to give threonylcarbamoyl-AMP (TC-AMP) as the acyladenylate intermediate, with the release of diphosphate. This Vibrio vulnificus (strain CMCP6) protein is Threonylcarbamoyl-AMP synthase.